The following is a 397-amino-acid chain: 2-oxoglutarate and iron-dependent oxygenase domain-containing protein ICU11 (397 aa).

The tract at residues 1–56 is disordered; it reads MCNQTPLRSMALDSSGKQPEQQQQQQPRASSGNGEARLKLRRTPNEEHEPENYEDL. The span at 18–27 shows a compositional bias: low complexity; the sequence is QPEQQQQQQP. A Fe2OG dioxygenase domain is found at 238–339; the sequence is SLDSHHGYIV…RANLILWCRS (102 aa). Fe cation-binding residues include His260, Asp262, and His320. Arg330 provides a ligand contact to 2-oxoglutarate.

Fe(2+) is required as a cofactor. Requires L-ascorbate as cofactor. Expressed in roots, cotyledons, rosette leaves, cauline leaves and inflorescences.

It is found in the nucleus. The protein localises to the nucleoplasm. In terms of biological role, participates in the epigenetic repression of flowering genes in association with CP2. Functions in the repression of several members of the MADS-box transcription factors family, including SEP3, during vegetative development via histone modification. The sequence is that of 2-oxoglutarate and iron-dependent oxygenase domain-containing protein ICU11 from Arabidopsis thaliana (Mouse-ear cress).